A 496-amino-acid chain; its full sequence is Aldehyde dehydrogenase 1A1 (496 aa).

Residues Lys-86 and Lys-123 each carry the N6-acetyllysine modification. NAD(+)-binding positions include 162-165, 188-191, 221-222, and 241-242; these read IPWN, KPAE, GP, and GS. N6-acetyllysine is present on Lys-247. The active-site Proton acceptor is Glu-264. 264-266 is an NAD(+) binding site; it reads ELG. The Nucleophile role is filled by Cys-298. A mediates interaction with PRMT3 region spans residues 331–496; it reads LAPEVNQGPQ…VTVKISQKNS (166 aa). 344–348 is a binding site for NAD(+); it reads EQYNK. 2 positions are modified to N6-acetyllysine: Lys-348 and Lys-362. An NAD(+)-binding site is contributed by 395–397; it reads EIF. Lys-405 bears the N6-acetyllysine mark. A Phosphoserine modification is found at Ser-408. Residues Lys-414, Lys-430, and Lys-490 each carry the N6-acetyllysine modification.

This sequence belongs to the aldehyde dehydrogenase family. Homotetramer. Interacts with PRMT3; the interaction is direct, inhibits ALDH1A1 aldehyde dehydrogenase activity and is independent of the methyltransferase activity of PRMT3. The N-terminus is blocked most probably by acetylation.

The protein resides in the cytoplasm. It is found in the cytosol. The protein localises to the cell projection. Its subcellular location is the axon. The catalysed reaction is an aldehyde + NAD(+) + H2O = a carboxylate + NADH + 2 H(+). It catalyses the reaction all-trans-retinal + NAD(+) + H2O = all-trans-retinoate + NADH + 2 H(+). It carries out the reaction 9-cis-retinal + NAD(+) + H2O = 9-cis-retinoate + NADH + 2 H(+). The enzyme catalyses 11-cis-retinal + NAD(+) + H2O = 11-cis-retinoate + NADH + 2 H(+). The catalysed reaction is 13-cis-retinal + NAD(+) + H2O = 13-cis-retinoate + NADH + 2 H(+). It catalyses the reaction (E)-4-hydroxynon-2-enal + NAD(+) + H2O = (E)-4-hydroxynon-2-enoate + NADH + 2 H(+). It carries out the reaction malonaldehyde + NAD(+) + H2O = 3-oxopropanoate + NADH + 2 H(+). The enzyme catalyses hexanal + NAD(+) + H2O = hexanoate + NADH + 2 H(+). The catalysed reaction is propanal + NAD(+) + H2O = propanoate + NADH + 2 H(+). It catalyses the reaction 3-deoxyglucosone + NAD(+) + H2O = 2-dehydro-3-deoxy-D-gluconate + NADH + 2 H(+). It carries out the reaction acetaldehyde + NAD(+) + H2O = acetate + NADH + 2 H(+). The enzyme catalyses benzaldehyde + NAD(+) + H2O = benzoate + NADH + 2 H(+). The catalysed reaction is 4-aminobutanal + NAD(+) + H2O = 4-aminobutanoate + NADH + 2 H(+). It participates in cofactor metabolism; retinol metabolism. Cytosolic dehydrogenase that catalyzes the irreversible oxidation of a wide range of aldehydes to their corresponding carboxylic acid. Functions downstream of retinol dehydrogenases and catalyzes the oxidation of retinaldehyde into retinoic acid, the second step in the oxidation of retinol/vitamin A into retinoic acid. This pathway is crucial to control the levels of retinol and retinoic acid, two important molecules which excess can be teratogenic and cytotoxic. Also oxidizes aldehydes resulting from lipid peroxidation like (E)-4-hydroxynon-2-enal/HNE, malonaldehyde and hexanal that form protein adducts and are highly cytotoxic. By participating for instance to the clearance of (E)-4-hydroxynon-2-enal/HNE in the lens epithelium prevents the formation of HNE-protein adducts and lens opacification. Functions also downstream of fructosamine-3-kinase in the fructosamine degradation pathway by catalyzing the oxidation of 3-deoxyglucosone, the carbohydrate product of fructosamine 3-phosphate decomposition, which is itself a potent glycating agent that may react with lysine and arginine side-chains of proteins. Also has an aminobutyraldehyde dehydrogenase activity and is probably part of an alternative pathway for the biosynthesis of GABA/4-aminobutanoate in midbrain, thereby playing a role in GABAergic synaptic transmission. The sequence is that of Aldehyde dehydrogenase 1A1 from Oryctolagus cuniculus (Rabbit).